Here is a 324-residue protein sequence, read N- to C-terminus: CIMIP2 protein GA14893 (324 aa).

The protein belongs to the CIMIP2 family.

Its subcellular location is the cytoplasm. It localises to the cytoskeleton. The protein localises to the cilium axoneme. Probable microtubule inner protein (MIP) part of the dynein-decorated doublet microtubules (DMTs) in cilium axoneme. The chain is CIMIP2 protein GA14893 from Drosophila pseudoobscura pseudoobscura (Fruit fly).